The following is an 898-amino-acid chain: Coiled-coil domain-containing protein 186 (898 aa).

Disordered regions lie at residues Met-1–Lys-43, Asn-68–Asn-95, and Arg-702–Ala-749. Ser-2 is subject to N-acetylserine. A compositionally biased stretch (polar residues) spans Lys-82–Asn-95. Residues Lys-201 to Ser-712 adopt a coiled-coil conformation. Residues Arg-703–Val-717 are compositionally biased toward basic and acidic residues. Positions Ser-718 to Ser-734 are enriched in low complexity. The residue at position 740 (Ser-740) is a Phosphoserine. Coiled coils occupy residues Ala-759–Tyr-803 and Lys-855–Arg-894.

The polypeptide is Coiled-coil domain-containing protein 186 (CCDC186) (Homo sapiens (Human)).